A 662-amino-acid polypeptide reads, in one-letter code: Phosphomethylpyrimidine synthase (662 aa).

Substrate contacts are provided by residues asparagine 235, methionine 264, tyrosine 293, histidine 329, 349–351, 390–393, and glutamate 429; these read SRG and DGMR. Histidine 433 is a binding site for Zn(2+). Tyrosine 456 is a binding site for substrate. Histidine 497 provides a ligand contact to Zn(2+). Positions 577, 580, and 585 each coordinate [4Fe-4S] cluster.

It belongs to the ThiC family. In terms of assembly, homodimer. The cofactor is [4Fe-4S] cluster.

The catalysed reaction is 5-amino-1-(5-phospho-beta-D-ribosyl)imidazole + S-adenosyl-L-methionine = 4-amino-2-methyl-5-(phosphooxymethyl)pyrimidine + CO + 5'-deoxyadenosine + formate + L-methionine + 3 H(+). It participates in cofactor biosynthesis; thiamine diphosphate biosynthesis. Functionally, catalyzes the synthesis of the hydroxymethylpyrimidine phosphate (HMP-P) moiety of thiamine from aminoimidazole ribotide (AIR) in a radical S-adenosyl-L-methionine (SAM)-dependent reaction. This is Phosphomethylpyrimidine synthase from Shewanella halifaxensis (strain HAW-EB4).